We begin with the raw amino-acid sequence, 276 residues long: Octopine-binding periplasmic protein (276 aa).

The signal sequence occupies residues 1 to 20 (MKLKTILCAALLLVAGQAAA). Cysteines 57 and 64 form a disulfide.

This sequence belongs to the bacterial solute-binding protein 3 family.

It is found in the periplasm. Its function is as follows. Component of the octopine active transport system probably consisting of four subunits: Q, M, P and T. The protein is Octopine-binding periplasmic protein (occT) of Agrobacterium tumefaciens (strain Ach5).